The primary structure comprises 965 residues: Isoleucine--tRNA ligase (965 aa).

The 'HIGH' region signature appears at 68 to 78; the sequence is PYANGSLHMGH. Residue Glu582 coordinates L-isoleucyl-5'-AMP. Residues 623-627 carry the 'KMSKS' region motif; the sequence is KMSKS. Lys626 is a binding site for ATP. Residues Cys936, Cys939, Cys956, and Cys959 each contribute to the Zn(2+) site.

It belongs to the class-I aminoacyl-tRNA synthetase family. IleS type 1 subfamily. In terms of assembly, monomer. Zn(2+) serves as cofactor.

The protein localises to the cytoplasm. The enzyme catalyses tRNA(Ile) + L-isoleucine + ATP = L-isoleucyl-tRNA(Ile) + AMP + diphosphate. Catalyzes the attachment of isoleucine to tRNA(Ile). As IleRS can inadvertently accommodate and process structurally similar amino acids such as valine, to avoid such errors it has two additional distinct tRNA(Ile)-dependent editing activities. One activity is designated as 'pretransfer' editing and involves the hydrolysis of activated Val-AMP. The other activity is designated 'posttransfer' editing and involves deacylation of mischarged Val-tRNA(Ile). The sequence is that of Isoleucine--tRNA ligase from Prochlorococcus marinus subsp. pastoris (strain CCMP1986 / NIES-2087 / MED4).